The chain runs to 58 residues: Sperm histone P2b (58 aa).

The tract at residues 20 to 41 is disordered; that stretch reads LRRRRYRSSRRRRRRPCRRRRH.

It belongs to the protamine P2 family. As to expression, testis.

It localises to the nucleus. The protein resides in the chromosome. Protamines substitute for histones in the chromatin of sperm during the haploid phase of spermatogenesis. They compact sperm DNA into a highly condensed, stable and inactive complex. The chain is Sperm histone P2b from Equus caballus (Horse).